The sequence spans 323 residues: Beta-ketoacyl-[acyl-carrier-protein] synthase III (323 aa).

Catalysis depends on residues Cys-114 and His-250. The interval 251-255 (QANIR) is ACP-binding. Asn-280 is an active-site residue.

It belongs to the thiolase-like superfamily. FabH family. As to quaternary structure, homodimer.

The protein resides in the cytoplasm. The catalysed reaction is malonyl-[ACP] + acetyl-CoA + H(+) = 3-oxobutanoyl-[ACP] + CO2 + CoA. It functions in the pathway lipid metabolism; fatty acid biosynthesis. Catalyzes the condensation reaction of fatty acid synthesis by the addition to an acyl acceptor of two carbons from malonyl-ACP. Catalyzes the first condensation reaction which initiates fatty acid synthesis and may therefore play a role in governing the total rate of fatty acid production. Possesses both acetoacetyl-ACP synthase and acetyl transacylase activities. Its substrate specificity determines the biosynthesis of branched-chain and/or straight-chain of fatty acids. The polypeptide is Beta-ketoacyl-[acyl-carrier-protein] synthase III (Ruegeria pomeroyi (strain ATCC 700808 / DSM 15171 / DSS-3) (Silicibacter pomeroyi)).